The chain runs to 105 residues: Protein yippee-like At4g27740 (105 aa).

In terms of domain architecture, Yippee spans 8-105; that stretch reads PTYFCRNCEN…IEKLKLTKRY (98 aa). Zn(2+) contacts are provided by C12, C15, C68, and C71.

This sequence belongs to the yippee family.

This is Protein yippee-like At4g27740 from Arabidopsis thaliana (Mouse-ear cress).